Reading from the N-terminus, the 357-residue chain is Quinolinate synthase (357 aa).

Residues His50 and Ser71 each contribute to the iminosuccinate site. Cys116 is a binding site for [4Fe-4S] cluster. Iminosuccinate is bound by residues 142 to 144 and Ser159; that span reads YAN. A [4Fe-4S] cluster-binding site is contributed by Cys203. Iminosuccinate-binding positions include 229–231 and Thr246; that span reads HPE. Position 300 (Cys300) interacts with [4Fe-4S] cluster.

Belongs to the quinolinate synthase family. Type 1 subfamily. [4Fe-4S] cluster is required as a cofactor.

Its subcellular location is the cytoplasm. The enzyme catalyses iminosuccinate + dihydroxyacetone phosphate = quinolinate + phosphate + 2 H2O + H(+). It participates in cofactor biosynthesis; NAD(+) biosynthesis; quinolinate from iminoaspartate: step 1/1. In terms of biological role, catalyzes the condensation of iminoaspartate with dihydroxyacetone phosphate to form quinolinate. The chain is Quinolinate synthase from Shewanella oneidensis (strain ATCC 700550 / JCM 31522 / CIP 106686 / LMG 19005 / NCIMB 14063 / MR-1).